The chain runs to 465 residues: Soluble pyridine nucleotide transhydrogenase (465 aa).

36–45 contributes to the FAD binding site; it reads ERYDNVGGGC.

This sequence belongs to the class-I pyridine nucleotide-disulfide oxidoreductase family. Requires FAD as cofactor.

The protein localises to the cytoplasm. It carries out the reaction NAD(+) + NADPH = NADH + NADP(+). Its function is as follows. Conversion of NADPH, generated by peripheral catabolic pathways, to NADH, which can enter the respiratory chain for energy generation. In Sodalis glossinidius (strain morsitans), this protein is Soluble pyridine nucleotide transhydrogenase.